A 215-amino-acid chain; its full sequence is 3-isopropylmalate dehydratase small subunit (215 aa).

It belongs to the LeuD family. LeuD type 1 subfamily. In terms of assembly, heterodimer of LeuC and LeuD.

It carries out the reaction (2R,3S)-3-isopropylmalate = (2S)-2-isopropylmalate. Its pathway is amino-acid biosynthesis; L-leucine biosynthesis; L-leucine from 3-methyl-2-oxobutanoate: step 2/4. Its function is as follows. Catalyzes the isomerization between 2-isopropylmalate and 3-isopropylmalate, via the formation of 2-isopropylmaleate. The sequence is that of 3-isopropylmalate dehydratase small subunit from Stutzerimonas stutzeri (strain A1501) (Pseudomonas stutzeri).